The chain runs to 328 residues: Phenylalanine--tRNA ligase alpha subunit (328 aa).

E253 contributes to the Mg(2+) binding site.

This sequence belongs to the class-II aminoacyl-tRNA synthetase family. Phe-tRNA synthetase alpha subunit type 1 subfamily. As to quaternary structure, tetramer of two alpha and two beta subunits. Mg(2+) serves as cofactor.

The protein resides in the cytoplasm. It carries out the reaction tRNA(Phe) + L-phenylalanine + ATP = L-phenylalanyl-tRNA(Phe) + AMP + diphosphate + H(+). This is Phenylalanine--tRNA ligase alpha subunit from Actinobacillus pleuropneumoniae serotype 7 (strain AP76).